Here is a 483-residue protein sequence, read N- to C-terminus: tRNA-2-methylthio-N(6)-dimethylallyladenosine synthase (483 aa).

The MTTase N-terminal domain occupies 31–148 (KKLYIETQGC…LPQMLDQHQD (118 aa)). Residues cysteine 40, cysteine 77, cysteine 111, cysteine 192, cysteine 196, and cysteine 199 each contribute to the [4Fe-4S] cluster site. Positions 178–410 (RVEGFKAFVS…QHWIKQSSIR (233 aa)) constitute a Radical SAM core domain. Residues 413–477 (DAMQGTIQRV…LNLVYGELLN (65 aa)) form the TRAM domain.

This sequence belongs to the methylthiotransferase family. MiaB subfamily. Monomer. The cofactor is [4Fe-4S] cluster.

It is found in the cytoplasm. The catalysed reaction is N(6)-dimethylallyladenosine(37) in tRNA + (sulfur carrier)-SH + AH2 + 2 S-adenosyl-L-methionine = 2-methylsulfanyl-N(6)-dimethylallyladenosine(37) in tRNA + (sulfur carrier)-H + 5'-deoxyadenosine + L-methionine + A + S-adenosyl-L-homocysteine + 2 H(+). Catalyzes the methylthiolation of N6-(dimethylallyl)adenosine (i(6)A), leading to the formation of 2-methylthio-N6-(dimethylallyl)adenosine (ms(2)i(6)A) at position 37 in tRNAs that read codons beginning with uridine. The chain is tRNA-2-methylthio-N(6)-dimethylallyladenosine synthase from Acinetobacter baylyi (strain ATCC 33305 / BD413 / ADP1).